We begin with the raw amino-acid sequence, 275 residues long: Membrane protein insertase YidC (275 aa).

Residues 1–22 (MKKYKRLLLMAGLVTLVFVLSA) form the signal peptide. The N-palmitoyl cysteine moiety is linked to residue C23. A lipid anchor (S-diacylglycerol cysteine) is attached at C23. The next 4 membrane-spanning stretches (helical) occupy residues 53 to 73 (LGGSVGIGIILFTLVIRIILL), 127 to 147 (YIGCLPLLVQLPIMMALYQAI), 169 to 189 (YLILPILAAVFTFASTYLSSM), and 206 to 226 (PAMIFFMGISLASSLSLYWVV). The span at 249-266 (EEAARQAKARERALERAK) shows a compositional bias: basic and acidic residues. Residues 249–275 (EEAARQAKARERALERAKSPKKKGKKK) form a disordered region.

It belongs to the OXA1/ALB3/YidC family. Type 2 subfamily.

It localises to the cell membrane. Its function is as follows. Required for the insertion and/or proper folding and/or complex formation of integral membrane proteins into the membrane. Involved in integration of membrane proteins that insert both dependently and independently of the Sec translocase complex, as well as at least some lipoproteins. The polypeptide is Membrane protein insertase YidC (Enterococcus faecalis (strain ATCC 700802 / V583)).